The sequence spans 366 residues: Peptide chain release factor 2 (366 aa).

Gln246 bears the N5-methylglutamine mark.

Belongs to the prokaryotic/mitochondrial release factor family. Post-translationally, methylated by PrmC. Methylation increases the termination efficiency of RF2.

It localises to the cytoplasm. Its function is as follows. Peptide chain release factor 2 directs the termination of translation in response to the peptide chain termination codons UGA and UAA. The sequence is that of Peptide chain release factor 2 from Frankia casuarinae (strain DSM 45818 / CECT 9043 / HFP020203 / CcI3).